The primary structure comprises 209 residues: Uracil phosphoribosyltransferase (209 aa).

Residues Arg-79, Arg-104, and Asp-131–Ser-139 each bind 5-phospho-alpha-D-ribose 1-diphosphate. Uracil contacts are provided by residues Ile-194 and Gly-199–Ala-201. Asp-200 contacts 5-phospho-alpha-D-ribose 1-diphosphate.

The protein belongs to the UPRTase family. Mg(2+) is required as a cofactor.

It carries out the reaction UMP + diphosphate = 5-phospho-alpha-D-ribose 1-diphosphate + uracil. The protein operates within pyrimidine metabolism; UMP biosynthesis via salvage pathway; UMP from uracil: step 1/1. With respect to regulation, allosterically activated by GTP. Catalyzes the conversion of uracil and 5-phospho-alpha-D-ribose 1-diphosphate (PRPP) to UMP and diphosphate. This chain is Uracil phosphoribosyltransferase, found in Thermotoga maritima (strain ATCC 43589 / DSM 3109 / JCM 10099 / NBRC 100826 / MSB8).